Here is a 221-residue protein sequence, read N- to C-terminus: Cytidylate kinase (221 aa).

11–19 (GPCGAGKST) is an ATP binding site.

Belongs to the cytidylate kinase family. Type 1 subfamily.

Its subcellular location is the cytoplasm. The enzyme catalyses CMP + ATP = CDP + ADP. The catalysed reaction is dCMP + ATP = dCDP + ADP. This is Cytidylate kinase from Mycoplasmopsis agalactiae (strain NCTC 10123 / CIP 59.7 / PG2) (Mycoplasma agalactiae).